The primary structure comprises 199 residues: Holliday junction branch migration complex subunit RuvA (199 aa).

The tract at residues methionine 1–serine 63 is domain I. The tract at residues aspartate 64 to alanine 141 is domain II. The interval alanine 141–valine 145 is flexible linker. A domain III region spans residues valine 146–arginine 199.

Belongs to the RuvA family. Homotetramer. Forms an RuvA(8)-RuvB(12)-Holliday junction (HJ) complex. HJ DNA is sandwiched between 2 RuvA tetramers; dsDNA enters through RuvA and exits via RuvB. An RuvB hexamer assembles on each DNA strand where it exits the tetramer. Each RuvB hexamer is contacted by two RuvA subunits (via domain III) on 2 adjacent RuvB subunits; this complex drives branch migration. In the full resolvosome a probable DNA-RuvA(4)-RuvB(12)-RuvC(2) complex forms which resolves the HJ.

It localises to the cytoplasm. In terms of biological role, the RuvA-RuvB-RuvC complex processes Holliday junction (HJ) DNA during genetic recombination and DNA repair, while the RuvA-RuvB complex plays an important role in the rescue of blocked DNA replication forks via replication fork reversal (RFR). RuvA specifically binds to HJ cruciform DNA, conferring on it an open structure. The RuvB hexamer acts as an ATP-dependent pump, pulling dsDNA into and through the RuvAB complex. HJ branch migration allows RuvC to scan DNA until it finds its consensus sequence, where it cleaves and resolves the cruciform DNA. In Rhodococcus erythropolis (strain PR4 / NBRC 100887), this protein is Holliday junction branch migration complex subunit RuvA.